The primary structure comprises 424 residues: Glutamyl-tRNA reductase (424 aa).

Substrate contacts are provided by residues T53 to R56, S111, E116 to Q118, and Q122. C54 serves as the catalytic Nucleophile. G191–I196 provides a ligand contact to NADP(+).

This sequence belongs to the glutamyl-tRNA reductase family. In terms of assembly, homodimer.

The catalysed reaction is (S)-4-amino-5-oxopentanoate + tRNA(Glu) + NADP(+) = L-glutamyl-tRNA(Glu) + NADPH + H(+). Its pathway is porphyrin-containing compound metabolism; protoporphyrin-IX biosynthesis; 5-aminolevulinate from L-glutamyl-tRNA(Glu): step 1/2. In terms of biological role, catalyzes the NADPH-dependent reduction of glutamyl-tRNA(Glu) to glutamate 1-semialdehyde (GSA). The chain is Glutamyl-tRNA reductase from Bordetella bronchiseptica (strain ATCC BAA-588 / NCTC 13252 / RB50) (Alcaligenes bronchisepticus).